Reading from the N-terminus, the 352-residue chain is CD5 antigen-like (352 aa).

The signal sequence occupies residues 1–21 (MAPLFNLMLAILSIFVGSCFS). SRCR domains lie at 27-128 (VQLV…AQCE), 141-241 (VRLV…MECE), and 246-348 (LKLV…VICT). Cystine bridges form between Cys-36–Cys-70, Cys-52–Cys-117, Cys-65–Cys-127, Cys-98–Cys-108, Cys-166–Cys-230, Cys-179–Cys-240, Cys-211–Cys-221, Cys-255–Cys-289, Cys-271–Cys-337, Cys-284–Cys-347, and Cys-317–Cys-327. Residue Asn-99 is glycosylated (N-linked (GlcNAc...) asparagine). N-linked (GlcNAc...) asparagine glycosylation is present at Asn-229.

In terms of assembly, interacts with FASN; the interaction is direct. Interacts (via SRCR2 and SRCR3) with pentameric IgM (via Fc region); disulfide-linked. Post-translationally, N-glycosylated. N-glycan at Asn-99 possesses only alpha2,6-sialylated terminals, while Asn-229 possesses both alpha2,6-sialylated and non-sialylated terminals. N-glycosylation increases secretion. As to expression, specifically expressed in tissue macrophages. Expressed in thymus, liver, spleen and lymph nodes. Present in Th17 cells; mainly present in non-pathogenic Th17 cells.

The protein resides in the secreted. Its subcellular location is the cytoplasm. In terms of biological role, secreted protein that acts as a key regulator of lipid synthesis: mainly expressed by macrophages in lymphoid and inflamed tissues and regulates mechanisms in inflammatory responses, such as infection or atherosclerosis. Able to inhibit lipid droplet size in adipocytes. Following incorporation into mature adipocytes via CD36-mediated endocytosis, associates with cytosolic FASN, inhibiting fatty acid synthase activity and leading to lipolysis, the degradation of triacylglycerols into glycerol and free fatty acids (FFA). CD5L-induced lipolysis occurs with progression of obesity: participates in obesity-associated inflammation following recruitment of inflammatory macrophages into adipose tissues, a cause of insulin resistance and obesity-related metabolic disease. Regulation of intracellular lipids mediated by CD5L has a direct effect on transcription regulation mediated by nuclear receptors ROR-gamma (RORC). Acts as a key regulator of metabolic switch in T-helper Th17 cells. Regulates the expression of pro-inflammatory genes in Th17 cells by altering the lipid content and limiting synthesis of cholesterol ligand of RORC, the master transcription factor of Th17-cell differentiation. CD5L is mainly present in non-pathogenic Th17 cells, where it decreases the content of polyunsaturated fatty acyls (PUFA), affecting two metabolic proteins MSMO1 and CYP51A1, which synthesize ligands of RORC, limiting RORC activity and expression of pro-inflammatory genes. Participates in obesity-associated autoimmunity via its association with IgM, interfering with the binding of IgM to Fcalpha/mu receptor and enhancing the development of long-lived plasma cells that produce high-affinity IgG autoantibodies. Also acts as an inhibitor of apoptosis in macrophages: promotes macrophage survival from the apoptotic effects of oxidized lipids in case of atherosclerosis. Involved in early response to microbial infection against various pathogens by acting as a pattern recognition receptor and by promoting autophagy. This Mus musculus (Mouse) protein is CD5 antigen-like (Cd5l).